We begin with the raw amino-acid sequence, 223 residues long: MKFAVLVFPGSNCDRDMYNAAIKSGAQADYVDYRETSLDGYDGVLIPGGFSFGDYLRSGAMASVAPIINEVKRLANDGKPVLGVCNGFQILTEIGLLPGALLHNDSHLFISRNENLKIANNQTPFTNLYGENEIVVYPVAHGEGHYYCTDDIYNELVENNQIILTYEDNPNGSHENIAGIVNKAGNVCGMMPHPERALEKILGTDSGVKLFEAMVNSWREQNV.

In terms of domain architecture, Glutamine amidotransferase type-1 spans 3–223 (FAVLVFPGSN…MVNSWREQNV (221 aa)). Cys-85 (nucleophile) is an active-site residue. Active-site residues include His-193 and Glu-195.

In terms of assembly, part of the FGAM synthase complex composed of 1 PurL, 1 PurQ and 2 PurS subunits.

The protein resides in the cytoplasm. The catalysed reaction is N(2)-formyl-N(1)-(5-phospho-beta-D-ribosyl)glycinamide + L-glutamine + ATP + H2O = 2-formamido-N(1)-(5-O-phospho-beta-D-ribosyl)acetamidine + L-glutamate + ADP + phosphate + H(+). The enzyme catalyses L-glutamine + H2O = L-glutamate + NH4(+). Its pathway is purine metabolism; IMP biosynthesis via de novo pathway; 5-amino-1-(5-phospho-D-ribosyl)imidazole from N(2)-formyl-N(1)-(5-phospho-D-ribosyl)glycinamide: step 1/2. In terms of biological role, part of the phosphoribosylformylglycinamidine synthase complex involved in the purines biosynthetic pathway. Catalyzes the ATP-dependent conversion of formylglycinamide ribonucleotide (FGAR) and glutamine to yield formylglycinamidine ribonucleotide (FGAM) and glutamate. The FGAM synthase complex is composed of three subunits. PurQ produces an ammonia molecule by converting glutamine to glutamate. PurL transfers the ammonia molecule to FGAR to form FGAM in an ATP-dependent manner. PurS interacts with PurQ and PurL and is thought to assist in the transfer of the ammonia molecule from PurQ to PurL. The polypeptide is Phosphoribosylformylglycinamidine synthase subunit PurQ (Staphylococcus haemolyticus (strain JCSC1435)).